The primary structure comprises 172 residues: MDRAQKQESIEALKSVFADAGAVVVTHYMGMTVAEMTELRSRLRKEDATFQVVKNTLVQKALDGSIGEAGDALFTGPVAIAFGSDPVSAAKIVTQYAKENDKLKLVGGILGQTTVLDEAAVRALATLPSLDQIRGKLIGLIQAPATKIAGVLQAPAGQLARVLNAYATKDAA.

The protein belongs to the universal ribosomal protein uL10 family. Part of the ribosomal stalk of the 50S ribosomal subunit. The N-terminus interacts with L11 and the large rRNA to form the base of the stalk. The C-terminus forms an elongated spine to which L12 dimers bind in a sequential fashion forming a multimeric L10(L12)X complex.

Its function is as follows. Forms part of the ribosomal stalk, playing a central role in the interaction of the ribosome with GTP-bound translation factors. The sequence is that of Large ribosomal subunit protein uL10 from Caulobacter sp. (strain K31).